The chain runs to 274 residues: tRNA-cytidine(32) 2-sulfurtransferase (274 aa).

The PP-loop motif motif lies at 40-45; it reads SGGKDS. [4Fe-4S] cluster is bound by residues C115, C118, and C206.

Belongs to the TtcA family. As to quaternary structure, homodimer. Requires Mg(2+) as cofactor. It depends on [4Fe-4S] cluster as a cofactor.

Its subcellular location is the cytoplasm. It catalyses the reaction cytidine(32) in tRNA + S-sulfanyl-L-cysteinyl-[cysteine desulfurase] + AH2 + ATP = 2-thiocytidine(32) in tRNA + L-cysteinyl-[cysteine desulfurase] + A + AMP + diphosphate + H(+). Its pathway is tRNA modification. Catalyzes the ATP-dependent 2-thiolation of cytidine in position 32 of tRNA, to form 2-thiocytidine (s(2)C32). The sulfur atoms are provided by the cysteine/cysteine desulfurase (IscS) system. The chain is tRNA-cytidine(32) 2-sulfurtransferase from Stutzerimonas stutzeri (strain A1501) (Pseudomonas stutzeri).